Reading from the N-terminus, the 143-residue chain is MFYGEYQHSVDAKGRVIIPSKFREGLGEKFILTKGLDNCLFAYSLEEWSNLEAKLRSLPFTDKDVRAFVRFFFAGAAEVEVDKQGRILIPQNLREYAGLEKDVYIIGVSTRVEVWDKSKWESYSGDENMSAESIAEKMAMLGI.

SpoVT-AbrB domains follow at residues 5 to 47 (EYQH…SLEE) and 76 to 119 (AAEV…DKSK).

Belongs to the MraZ family. In terms of assembly, forms oligomers.

The protein resides in the cytoplasm. It localises to the nucleoid. The sequence is that of Transcriptional regulator MraZ from Acetivibrio thermocellus (strain ATCC 27405 / DSM 1237 / JCM 9322 / NBRC 103400 / NCIMB 10682 / NRRL B-4536 / VPI 7372) (Clostridium thermocellum).